A 341-amino-acid chain; its full sequence is Elongation factor Ts (341 aa).

The tract at residues 80-83 (TDFV) is involved in Mg(2+) ion dislocation from EF-Tu.

Belongs to the EF-Ts family.

It is found in the cytoplasm. In terms of biological role, associates with the EF-Tu.GDP complex and induces the exchange of GDP to GTP. It remains bound to the aminoacyl-tRNA.EF-Tu.GTP complex up to the GTP hydrolysis stage on the ribosome. This is Elongation factor Ts from Lactobacillus gasseri (strain ATCC 33323 / DSM 20243 / BCRC 14619 / CIP 102991 / JCM 1131 / KCTC 3163 / NCIMB 11718 / NCTC 13722 / AM63).